Reading from the N-terminus, the 103-residue chain is Large ribosomal subunit protein bL21 (103 aa).

It belongs to the bacterial ribosomal protein bL21 family. Part of the 50S ribosomal subunit. Contacts protein L20.

This protein binds to 23S rRNA in the presence of protein L20. The polypeptide is Large ribosomal subunit protein bL21 (Shewanella denitrificans (strain OS217 / ATCC BAA-1090 / DSM 15013)).